Reading from the N-terminus, the 277-residue chain is Zinc transporter ZupT (277 aa).

8 consecutive transmembrane segments (helical) span residues valine 7–isoleucine 27, phenylalanine 38–isoleucine 58, valine 73–isoleucine 93, alanine 133–alanine 155, alanine 165–tyrosine 187, phenylalanine 196–valine 216, phenylalanine 220–isoleucine 240, and leucine 257–leucine 277. Fe(2+) contacts are provided by asparagine 145 and glutamate 148. Residues glutamate 148 and histidine 173 each coordinate Zn(2+). Positions 174, 177, and 206 each coordinate Fe(2+). Residue glutamate 177 coordinates Zn(2+).

Belongs to the ZIP transporter (TC 2.A.5) family. ZupT subfamily.

It is found in the cell inner membrane. It carries out the reaction Zn(2+)(in) = Zn(2+)(out). Functionally, mediates zinc uptake. May also transport other divalent cations. The polypeptide is Zinc transporter ZupT (Nitratidesulfovibrio vulgaris (strain ATCC 29579 / DSM 644 / CCUG 34227 / NCIMB 8303 / VKM B-1760 / Hildenborough) (Desulfovibrio vulgaris)).